The following is a 301-amino-acid chain: MNIRDLEYLVALSEYKHFRRAADSCNVSQPTLSGQIRKLEDELGIILLERTSRKVLFTQSGMLLVDQARTVLREVKLLKEMASNQGKEMTGPLHIGLIPTVGPYLLPYIVPMLKAAFPDLEVFLYEAQTHQLLEQLETGRLDCAIVATVPETEAFIEVPIFNEKMLLAVSEHHPWAQESKLPMNQLNGQEMLMLDDGHCLRNQALDYCFTAGAKENSHFQATSLETLRNMVAANAGITFMPELAVLNEGTRKGVKYIPCYSPEPSRTIALVYRPGSPLRNRYERVASAVSDEVKSILDGLK.

The HTH lysR-type domain maps to 1–58; the sequence is MNIRDLEYLVALSEYKHFRRAADSCNVSQPTLSGQIRKLEDELGIILLERTSRKVLFT. The H-T-H motif DNA-binding region spans 18–37; the sequence is FRRAADSCNVSQPTLSGQIR.

Belongs to the LysR transcriptional regulatory family.

Functionally, required for the induction of a regulon of hydrogen peroxide inducible genes such as catalase and glutathione-reductase. This Haemophilus influenzae (strain ATCC 51907 / DSM 11121 / KW20 / Rd) protein is Hydrogen peroxide-inducible genes activator (oxyR).